The primary structure comprises 232 residues: 7-cyano-7-deazaguanine synthase 1 (232 aa).

7-17 (CSGGLDSVSLA) contributes to the ATP binding site. The Zn(2+) site is built by cysteine 185, cysteine 193, cysteine 196, and cysteine 199.

The protein belongs to the QueC family. The cofactor is Zn(2+).

The enzyme catalyses 7-carboxy-7-deazaguanine + NH4(+) + ATP = 7-cyano-7-deazaguanine + ADP + phosphate + H2O + H(+). It functions in the pathway purine metabolism; 7-cyano-7-deazaguanine biosynthesis. Catalyzes the ATP-dependent conversion of 7-carboxy-7-deazaguanine (CDG) to 7-cyano-7-deazaguanine (preQ(0)). This is 7-cyano-7-deazaguanine synthase 1 from Mesorhizobium japonicum (strain LMG 29417 / CECT 9101 / MAFF 303099) (Mesorhizobium loti (strain MAFF 303099)).